The primary structure comprises 190 residues: dTTP/UTP pyrophosphatase (190 aa).

The active-site Proton acceptor is the aspartate 68.

The protein belongs to the Maf family. YhdE subfamily. Requires a divalent metal cation as cofactor.

The protein localises to the cytoplasm. It carries out the reaction dTTP + H2O = dTMP + diphosphate + H(+). The catalysed reaction is UTP + H2O = UMP + diphosphate + H(+). Functionally, nucleoside triphosphate pyrophosphatase that hydrolyzes dTTP and UTP. May have a dual role in cell division arrest and in preventing the incorporation of modified nucleotides into cellular nucleic acids. The protein is dTTP/UTP pyrophosphatase of Acholeplasma laidlawii (strain PG-8A).